Here is an 82-residue protein sequence, read N- to C-terminus: Small ribosomal subunit protein uS15 (82 aa).

The protein belongs to the universal ribosomal protein uS15 family. Part of the 30S ribosomal subunit. Forms a bridge to the 50S subunit in the 70S ribosome, contacting the 23S rRNA.

Functionally, one of the primary rRNA binding proteins, it binds directly to 16S rRNA where it helps nucleate assembly of the platform of the 30S subunit by binding and bridging several RNA helices of the 16S rRNA. In terms of biological role, forms an intersubunit bridge (bridge B4) with the 23S rRNA of the 50S subunit in the ribosome. This chain is Small ribosomal subunit protein uS15, found in Pelagibacter ubique (strain HTCC1062).